The primary structure comprises 955 residues: Eukaryotic translation initiation factor 3 subunit C (955 aa).

2 disordered regions span residues 1 to 22 and 157 to 299; these read MSRF…SEPV and RAAP…EEGW. Over residues 162–183 the composition is skewed to acidic residues; it reads DFAEEEEDDEREDEKGSDEEEE. A compositionally biased stretch (low complexity) spans 206 to 218; that stretch reads VKPVADSDSSDWG. The segment covering 219-229 has biased composition (acidic residues); that stretch reads SDSDSDSTSSD. Over residues 230 to 250 the composition is skewed to basic and acidic residues; it reads EDAKYTSIRDRFLKKPEKGTE. Residues 288-297 are compositionally biased toward acidic residues; sequence MFDENEEEEE. Residues 658–834 enclose the PCI domain; it reads FHMHINLELL…ETIVMHRSEP (177 aa). The interval 865 to 955 is disordered; it reads NFFQRGGNQG…RNVEYQNKAE (91 aa). Positions 882–894 are enriched in low complexity; it reads YRNQNQNQNWNNN. Residues 911-955 show a composition bias toward basic and acidic residues; sequence GEGREQREHHRDHHRDQREHREHQNREFREQREQMRNVEYQNKAE.

It belongs to the eIF-3 subunit C family. Component of the eukaryotic translation initiation factor 3 (eIF-3) complex.

It is found in the cytoplasm. Functionally, component of the eukaryotic translation initiation factor 3 (eIF-3) complex, which is involved in protein synthesis of a specialized repertoire of mRNAs and, together with other initiation factors, stimulates binding of mRNA and methionyl-tRNAi to the 40S ribosome. The eIF-3 complex specifically targets and initiates translation of a subset of mRNAs involved in cell proliferation. The polypeptide is Eukaryotic translation initiation factor 3 subunit C (Anopheles gambiae (African malaria mosquito)).